The chain runs to 149 residues: Cytochrome c' (149 aa).

Positions 1 to 19 (MRRVLLATLMAALPAAAMA) are cleaved as a signal peptide. Heme c is bound by residues arginine 29, threonine 89, alanine 90, cysteine 138, cysteine 141, and histidine 142.

Monomer and homodimer. In terms of processing, binds 1 heme c group covalently per subunit.

Cytochrome c' is the most widely occurring bacterial c-type cytochrome. Cytochromes c' are high-spin proteins and the heme has no sixth ligand. Their exact function is not known. The protein is Cytochrome c' (cycP) of Cereibacter sphaeroides (strain ATCC 17023 / DSM 158 / JCM 6121 / CCUG 31486 / LMG 2827 / NBRC 12203 / NCIMB 8253 / ATH 2.4.1.) (Rhodobacter sphaeroides).